A 433-amino-acid polypeptide reads, in one-letter code: MPSEILVKILSYLDAVTLVCIGCVSRRFYHLADDNLIWVRKYAAAFRSKRSRWKATSVEETATSLSLLSVWDKEDGYWKKEYITKQISSVRAALTNSLSPVKRRTSLPSKTKESLRISGLGWTIILREASGKEHIMQHSNLSVNDNSVTVFWHDKNWPHVDTLSTLDLYGATPIFMEQYKGPNTSCPRWLSLIEKYDLSNLRKSAMIGCDRHVRVFCVNPGLLVGLWQENGGLAFVMANIHSHGLFERSIMGSDTIPYTLPPDTTFVDNYPDSMTFYGDKGFQLHIDIHGSKTYFLCSTFHNLFCRRAGINNGYVKFLMINLKNNREHLPLVGKVGLEWRTDCLNGRIESCIVVDMTLLDEDKKPIWYVSSPVCLRSACLPDFPQPAYSFEYMDSVGGVCADLGWFENTDEYFIVRLDIYLSVAKLQQWFGRQ.

The 41-residue stretch at Met1 to Lys41 folds into the F-box domain.

In terms of assembly, directly interacts with SKP1 and CUL1. Expressed in testis.

Its function is as follows. Substrate-recognition component of the SCF (SKP1-CUL1-F-box protein)-type E3 ubiquitin ligase complex. This Mus musculus (Mouse) protein is F-box only protein 15 (Fbxo15).